We begin with the raw amino-acid sequence, 383 residues long: Erythronate-4-phosphate dehydrogenase (383 aa).

Substrate-binding residues include serine 45 and threonine 67. Aspartate 147 serves as a coordination point for NAD(+). Arginine 208 is an active-site residue. Aspartate 232 serves as a coordination point for NAD(+). Glutamate 237 is a catalytic residue. Histidine 254 serves as the catalytic Proton donor. Position 257 (glycine 257) interacts with NAD(+). Tyrosine 258 is a substrate binding site.

This sequence belongs to the D-isomer specific 2-hydroxyacid dehydrogenase family. PdxB subfamily. As to quaternary structure, homodimer.

It is found in the cytoplasm. It carries out the reaction 4-phospho-D-erythronate + NAD(+) = (R)-3-hydroxy-2-oxo-4-phosphooxybutanoate + NADH + H(+). It functions in the pathway cofactor biosynthesis; pyridoxine 5'-phosphate biosynthesis; pyridoxine 5'-phosphate from D-erythrose 4-phosphate: step 2/5. Its function is as follows. Catalyzes the oxidation of erythronate-4-phosphate to 3-hydroxy-2-oxo-4-phosphonooxybutanoate. This chain is Erythronate-4-phosphate dehydrogenase, found in Psychromonas ingrahamii (strain DSM 17664 / CCUG 51855 / 37).